The following is a 68-amino-acid chain: Protein P34 (68 aa).

2 helical membrane passes run 4 to 24 (FVGP…LAVL) and 41 to 61 (GFSS…GFAM).

It is found in the virion membrane. This is Protein P34 (XXXIV) from Acinetobacter calcoaceticus (Arthrobacter siderocapsulatus).